The sequence spans 463 residues: Homoserine O-acetyltransferase FUB5 (463 aa).

The region spanning 113–436 (NVMIICHALS…VSDDGHDAFL (324 aa)) is the AB hydrolase-1 domain. Ser211 functions as the Nucleophile in the catalytic mechanism. Residues 296 to 312 (RFGRDTGSKKKTQKQES) show a composition bias toward basic and acidic residues. Residues 296–331 (RFGRDTGSKKKTQKQESKTLPSNSTPIHSHSGADET) are disordered. Catalysis depends on residues Asp403 and His432.

This sequence belongs to the AB hydrolase superfamily. MetX family.

It catalyses the reaction L-homoserine + acetyl-CoA = O-acetyl-L-homoserine + CoA. The protein operates within mycotoxin biosynthesis. Homoserine O-acetyltransferase; part of the gene cluster that mediates the biosynthesis of fusaric acid, a mycotoxin with low to moderate toxicity to animals and humans, but with high phytotoxic properties. L-aspartate is suggested as fusaric acid amino acid precursor that is activated and further processed to O-acetyl-L-homoserine by cluster enzymes aspartate kinase FUB3 and homoserine O-acetyltransferase FUB5, as well as enzymes of the primary metabolism. The polyketide synthase (PKS) FUB1 generates the triketide trans-2-hexenal which is presumptively released by the hydrolase FUB4 and linked to the NRPS-bound amino acid precursor by NAD(P)-dependent dehydrogenase FUB6. FUB1, FUB4, and the non-canonical NRPS Fub8 may form an enzyme complex. Further processing of the NRPS-bound intermediate might be carried out by FUB6 and the sulfhydrylase FUB7, enabling a spontaneous electrocyclization to close the carbon backbone of fusaric acid. Dihydrofusaric acid is likely to be released via reduction by the thioester reductase (TR) domain of FUB8 whereupon the final oxidation to fusaric acid may (also) be performed by the FMN-dependent dehydrogenase FUB9. The chain is Homoserine O-acetyltransferase FUB5 from Gibberella moniliformis (strain M3125 / FGSC 7600) (Maize ear and stalk rot fungus).